The following is a 985-amino-acid chain: NAD kinase 2, chloroplastic (985 aa).

The transit peptide at 1 to 62 directs the protein to the chloroplast; sequence MFLCFCPCHV…KRRLRFVIRA (62 aa). Residues 335-380 are calmodulin-binding; that stretch reads APKAEQVELFASIVSDSSKRPIYVHSKEGVWRTSAMVSRWKQYMTR. 2 disordered regions span residues 389–466 and 548–615; these read SEES…PPGN and FSNG…DEAG. Basic and acidic residues-rich tracts occupy residues 390-399 and 413-429; these read EESKRREVSE and VPDE…EVDS. The span at 548 to 569 shows a compositional bias: polar residues; that stretch reads FSNGNVHASDNTNKSISDNRGN.

It belongs to the NAD kinase family. Expressed in leaves.

It localises to the plastid. Its subcellular location is the chloroplast. It catalyses the reaction NAD(+) + ATP = ADP + NADP(+) + H(+). Its function is as follows. Involved in chlorophyll synthesis and chloroplast protection against oxidative damage. This is NAD kinase 2, chloroplastic (NADK2) from Arabidopsis thaliana (Mouse-ear cress).